The following is a 71-amino-acid chain: Protein PSY3 (71 aa).

A signal peptide spans 1 to 25; the sequence is MGYSSSSRIGLCLFLFFTFALLSSA. Positions 26–49 are excised as a propeptide; sequence RISLSFSENEMTVVPERSLMVSTN. The disordered stretch occupies residues 47 to 71; it reads STNDYSDPTANGRHDPPRGGRGRRR. Tyr-51 carries the sulfotyrosine modification. Pro-63 carries the post-translational modification 4-hydroxyproline. Pro-63 carries an O-linked (Ara...) hydroxyproline glycan. Residues 66 to 71 constitute a propeptide that is removed on maturation; sequence GRGRRR.

Belongs to the sulfated-peptide plant hormone family. The sulfation and the glycosylation are required for full activity.

It is found in the secreted. Functionally, promotes cellular proliferation and expansion. The chain is Protein PSY3 (PSY3) from Arabidopsis thaliana (Mouse-ear cress).